Reading from the N-terminus, the 296-residue chain is Large ribosomal subunit protein uL15m (296 aa).

The transit peptide at 1–20 (MAASGGSGGKATELLRCLPR) directs the protein to the mitochondrion. The disordered stretch occupies residues 25-66 (NLRPNPGARHREKRRGRGIHGGRKSGRGHKGETQRGNQPRLG). Residues 32 to 52 (ARHREKRRGRGIHGGRKSGRG) are compositionally biased toward basic residues.

It belongs to the universal ribosomal protein uL15 family. As to quaternary structure, component of the mitochondrial ribosome large subunit (39S) which comprises a 16S rRNA and about 50 distinct proteins.

It localises to the mitochondrion. The polypeptide is Large ribosomal subunit protein uL15m (mrpl15) (Xenopus laevis (African clawed frog)).